We begin with the raw amino-acid sequence, 395 residues long: XK-related protein 8 (395 aa).

Topologically, residues 1–12 are cytoplasmic; it reads MPWSSRGALLRD. The chain crosses the membrane as a helical span at residues 13–33; sequence LVLGVLGTAAFLLDLGTDLWA. Topologically, residues 34–47 are extracellular; the sequence is AVQYALGGRYLWAA. The chain crosses the membrane as a helical span at residues 48-68; that stretch reads LVLALLGLASVALQLFSWLWL. Topologically, residues 69 to 158 are cytoplasmic; the sequence is RADPAGLHGS…VLAIMLQSGR (90 aa). A helical transmembrane segment spans residues 159-179; sequence AEYYQWVGICTSFLGISWALL. Topologically, residues 180–200 are extracellular; the sequence is DYHRALRTCLPSRPLLGLGSS. A helical transmembrane segment spans residues 201–221; it reads VIYFLWNLLLLWPRVLAVALF. At 222–223 the chain is on the cytoplasmic side; the sequence is SA. The chain crosses the membrane as a helical span at residues 224 to 244; it reads LFPSYVALHFLGLWLVLLLWV. At 245–258 the chain is on the extracellular side; it reads WLQGTDFMPDPSSE. The chain crosses the membrane as a helical span at residues 259 to 279; the sequence is WLYQVTVATILYFSWFNVAEG. Over 280–284 the chain is Cytoplasmic; that stretch reads RTRGR. The chain crosses the membrane as a helical span at residues 285–305; sequence AIIHFAFLLSDSILLVATWVT. Residues 306–312 are Extracellular-facing; the sequence is HSSWLPS. The helical transmembrane segment at 313-333 threads the bilayer; sequence GIPLQLWLPVGCGCFFLGLAL. At 334–395 the chain is on the cytoplasmic side; it reads RLVYYHWLHP…KDEAALPVKG (62 aa). Residue S362 is modified to Phosphoserine. A Phosphothreonine modification is found at T375.

This sequence belongs to the XK family. Interacts with BSG and NPTN; which act as chaperones to localize XKR8 at the cell membrane. As to quaternary structure, homodimer. Post-translationally, undergoes proteolytic processing by caspase-3 (CASP3), leading to its activation. In terms of processing, phosphorylation at Thr-375 activates the phospholipid scramblase activity.

The protein resides in the cell membrane. Its subcellular location is the cytoplasm. It is found in the perinuclear region. It catalyses the reaction a 1,2-diacyl-sn-glycero-3-phospho-L-serine(in) = a 1,2-diacyl-sn-glycero-3-phospho-L-serine(out). Its activity is regulated as follows. Activated upon caspase cleavage to generate the XK-related protein 8, processed form. Does not act prior the onset of apoptosis. Functionally, phospholipid scramblase that promotes phosphatidylserine exposure on apoptotic cell surface. Phosphatidylserine is a specific marker only present at the surface of apoptotic cells and acts as a specific signal for engulfment. Required for the clearance of apoptotic cells, such as engulfment of apoptotic germ cells by Sertoli cells, clearance of senescent neutrophils or regulation of bipolar cell numbers in the retina. Has no effect on calcium-induced exposure of phosphatidylserine. Promotes myoblast differentiation and survival. The sequence is that of XK-related protein 8 from Pan troglodytes (Chimpanzee).